A 295-amino-acid polypeptide reads, in one-letter code: Nitrogenase iron protein 1 (295 aa).

12–19 (GKGGIGKS) contributes to the ATP binding site. Cys-100 is a binding site for [4Fe-4S] cluster. Arg-103 is modified (ADP-ribosylarginine; by dinitrogenase reductase ADP-ribosyltransferase). Cys-134 contributes to the [4Fe-4S] cluster binding site.

This sequence belongs to the NifH/BchL/ChlL family. Homodimer. The cofactor is [4Fe-4S] cluster. Post-translationally, the reversible ADP-ribosylation of Arg-103 inactivates the nitrogenase reductase and regulates nitrogenase activity.

It catalyses the reaction N2 + 8 reduced [2Fe-2S]-[ferredoxin] + 16 ATP + 16 H2O = H2 + 8 oxidized [2Fe-2S]-[ferredoxin] + 2 NH4(+) + 16 ADP + 16 phosphate + 6 H(+). Its function is as follows. The key enzymatic reactions in nitrogen fixation are catalyzed by the nitrogenase complex, which has 2 components: the iron protein and the molybdenum-iron protein. The polypeptide is Nitrogenase iron protein 1 (nifH1) (Mastigocladus laminosus (Fischerella sp.)).